The sequence spans 262 residues: Glutamate racemase (262 aa).

Substrate contacts are provided by residues 9–10 and 41–42; these read DS and YG. The active-site Proton donor/acceptor is the cysteine 73. 74–75 lines the substrate pocket; sequence NT. Catalysis depends on cysteine 180, which acts as the Proton donor/acceptor. 181-182 lines the substrate pocket; the sequence is TH.

This sequence belongs to the aspartate/glutamate racemases family.

It carries out the reaction L-glutamate = D-glutamate. Its pathway is cell wall biogenesis; peptidoglycan biosynthesis. Its function is as follows. Provides the (R)-glutamate required for cell wall biosynthesis. The protein is Glutamate racemase of Aliivibrio fischeri (strain ATCC 700601 / ES114) (Vibrio fischeri).